The following is a 344-amino-acid chain: Nuclear distribution protein nudE-like 1-A (344 aa).

Residues 26-187 adopt a coiled-coil conformation; the sequence is YKKSYKEAQE…RQELAVRDTR (162 aa). The span at 181–190 shows a compositional bias: basic and acidic residues; it reads LAVRDTRSEV. 2 disordered regions span residues 181–209 and 322–344; these read LAVR…TDSA and PGDG…VLSV.

It belongs to the nudE family. Post-translationally, phosphorylated in mitosis.

Its subcellular location is the cytoplasm. The protein localises to the cytoskeleton. It localises to the microtubule organizing center. It is found in the centrosome. The protein resides in the spindle. In terms of biological role, required for organization of the cellular microtubule array and microtubule anchoring at the centrosome. Positively regulates the activity of the minus-end directed microtubule motor protein dynein. May enhance dynein-mediated microtubule sliding by targeting dynein to the microtubule plus end. In Danio rerio (Zebrafish), this protein is Nuclear distribution protein nudE-like 1-A (ndel1a).